Consider the following 201-residue polypeptide: Protein lin-7 homolog B (201 aa).

The Kinase interacting site signature appears at methionine 1 to glutamate 13. In terms of domain architecture, L27 spans leucine 10–glycine 65. Positions valine 93–proline 175 constitute a PDZ domain.

This sequence belongs to the lin-7 family. As to quaternary structure, forms a complex with CASK and CASKIN1. Component of the brain-specific heterotrimeric complex (LIN-10-LIN-2-LIN-7 complex) composed of at least APBA1, CASK, and LIN7, which associates with the motor protein KIF17 to transport vesicles along microtubules. Forms a heterotrimeric complex composed of MMP5, LIN7B and PATJ; the N-terminal L27 domain of PALS1 interacts with the L27 domain of PATJ and the C-terminal L27 domain of PALS1 interacts with the L27 domain of LIN7B. Forms a heterotrimeric complex with DLG1 and CASK via their L27 domains. Interacts with DLG4 and GRIN2B as well as CDH1 and CTNNB1, the channels KCNJ12/Kir2.2, KCNJ4/Kir2.3 and probably KCNJ2/Kir2.1 and SLC6A12/BGT-1 via its PDZ domain. The association of LIN7A with cadherin and beta-catenin is calcium-dependent, occurs at synaptic junctions and requires the actin cytoskeleton. Interacts with EGFR, ERBB2, ERBB3 and ERBB4 with both PDZ and KID domains. Interacts with ASIC3. Interacts with TOPK. Interacts with RTKN. Associates with KIF17 via APBA1. Interacts with APBA1. Interacts with MPP7. Interacts with DLG2. Interacts with DLG3.

It localises to the cell membrane. The protein resides in the basolateral cell membrane. Its subcellular location is the cell junction. It is found in the postsynaptic density membrane. The protein localises to the tight junction. Plays a role in establishing and maintaining the asymmetric distribution of channels and receptors at the plasma membrane of polarized cells. Forms membrane-associated multiprotein complexes that may regulate delivery and recycling of proteins to the correct membrane domains. The tripartite complex composed of LIN7 (LIN7A, LIN7B or LIN7C), CASK and APBA1 associates with the motor protein KIF17 to transport vesicles containing N-methyl-D-aspartate (NMDA) receptor subunit NR2B along microtubules. This complex may have the potential to couple synaptic vesicle exocytosis to cell adhesion in brain. Ensures the proper localization of GRIN2B (subunit 2B of the NMDA receptor) to neuronal postsynaptic density and may function in localizing synaptic vesicles at synapses where it is recruited by beta-catenin and cadherin. Required to localize Kir2 channels, GABA transporter (SLC6A12) and EGFR/ERBB1, ERBB2, ERBB3 and ERBB4 to the basolateral membrane of epithelial cells. May increase the amplitude of ASIC3 acid-evoked currents by stabilizing the channel at the cell surface. This chain is Protein lin-7 homolog B (LIN7B), found in Bos taurus (Bovine).